Reading from the N-terminus, the 439-residue chain is 2-(3-amino-3-carboxypropyl)histidine synthase subunit 1 (439 aa).

The disordered stretch occupies residues Ser-11 to Lys-54. Residues Ser-44 to Lys-54 are compositionally biased toward polar residues. Cys-147, Cys-251, and Cys-380 together coordinate [4Fe-4S] cluster.

The protein belongs to the DPH1/DPH2 family. DPH1 subfamily. Component of the 2-(3-amino-3-carboxypropyl)histidine synthase complex composed of DPH1, DPH2, DPH3 and a NADH-dependent reductase, predominantly CBR1. [4Fe-4S] cluster serves as cofactor.

It localises to the cytoplasm. It carries out the reaction L-histidyl-[translation elongation factor 2] + S-adenosyl-L-methionine = 2-[(3S)-amino-3-carboxypropyl]-L-histidyl-[translation elongation factor 2] + S-methyl-5'-thioadenosine + H(+). Its pathway is protein modification; peptidyl-diphthamide biosynthesis. Catalyzes the first step of diphthamide biosynthesis, a post-translational modification of histidine which occurs in elongation factor 2. DPH1 and DPH2 transfer a 3-amino-3-carboxypropyl (ACP) group from S-adenosyl-L-methionine (SAM) to a histidine residue, the reaction is assisted by a reduction system comprising DPH3 and a NADH-dependent reductase, predominantly CBR1. In Yarrowia lipolytica (strain CLIB 122 / E 150) (Yeast), this protein is 2-(3-amino-3-carboxypropyl)histidine synthase subunit 1 (DPH1).